Reading from the N-terminus, the 510-residue chain is Archaeal glutamate synthase [NADPH] (510 aa).

2 consecutive 4Fe-4S ferredoxin-type domains span residues 10–37 and 38–68; these read YKVE…YRRE and GDRI…IKEN. Positions 19, 22, 25, 29, 48, 51, 54, and 58 each coordinate [4Fe-4S] cluster.

Belongs to the glutamate synthase family. FMN is required as a cofactor.

It carries out the reaction 2 L-glutamate + NADP(+) = L-glutamine + 2-oxoglutarate + NADPH + H(+). This is Archaeal glutamate synthase [NADPH] from Methanocaldococcus jannaschii (strain ATCC 43067 / DSM 2661 / JAL-1 / JCM 10045 / NBRC 100440) (Methanococcus jannaschii).